The primary structure comprises 546 residues: Probable bifunctional SAT/APS kinase (546 aa).

A sulfate adenylyltransferase region spans residues 1–370 (MEKIKYLKSI…LAETYVPKHK (370 aa)). The adenylsulfate kinase stretch occupies residues 371 to 546 (QGFCVWLTGL…FLKKEGFIKD (176 aa)). 379 to 386 (GLPCAGKS) lines the ATP pocket. S453 functions as the Phosphoserine intermediate in the catalytic mechanism.

In the N-terminal section; belongs to the sulfate adenylyltransferase family. This sequence in the C-terminal section; belongs to the APS kinase family.

It catalyses the reaction sulfate + ATP + H(+) = adenosine 5'-phosphosulfate + diphosphate. The catalysed reaction is adenosine 5'-phosphosulfate + ATP = 3'-phosphoadenylyl sulfate + ADP + H(+). It participates in sulfur metabolism; hydrogen sulfide biosynthesis; sulfite from sulfate: step 1/3. It functions in the pathway sulfur metabolism; hydrogen sulfide biosynthesis; sulfite from sulfate: step 2/3. In Aquifex aeolicus (strain VF5), this protein is Probable bifunctional SAT/APS kinase (sat/cysC).